A 335-amino-acid chain; its full sequence is Acetyl-coenzyme A carboxylase carboxyl transferase subunit alpha (335 aa).

A CoA carboxyltransferase C-terminal domain is found at 38–292 (TLEQKAEELR…ATALSEEIEN (255 aa)).

The protein belongs to the AccA family. Acetyl-CoA carboxylase is a heterohexamer composed of biotin carboxyl carrier protein (AccB), biotin carboxylase (AccC) and two subunits each of ACCase subunit alpha (AccA) and ACCase subunit beta (AccD).

Its subcellular location is the cytoplasm. The enzyme catalyses N(6)-carboxybiotinyl-L-lysyl-[protein] + acetyl-CoA = N(6)-biotinyl-L-lysyl-[protein] + malonyl-CoA. It participates in lipid metabolism; malonyl-CoA biosynthesis; malonyl-CoA from acetyl-CoA: step 1/1. Component of the acetyl coenzyme A carboxylase (ACC) complex. First, biotin carboxylase catalyzes the carboxylation of biotin on its carrier protein (BCCP) and then the CO(2) group is transferred by the carboxyltransferase to acetyl-CoA to form malonyl-CoA. The sequence is that of Acetyl-coenzyme A carboxylase carboxyl transferase subunit alpha from Heliobacterium modesticaldum (strain ATCC 51547 / Ice1).